The sequence spans 210 residues: Guanylate kinase (210 aa).

Residues 23 to 203 enclose the Guanylate kinase-like domain; that stretch reads GRVVVLSGPS…ACAELVSLLV (181 aa). Position 30–37 (30–37) interacts with ATP; sequence GPSAVGKS.

This sequence belongs to the guanylate kinase family.

It localises to the cytoplasm. It catalyses the reaction GMP + ATP = GDP + ADP. In terms of biological role, essential for recycling GMP and indirectly, cGMP. The protein is Guanylate kinase (gmk) of Mycobacterium leprae (strain TN).